The primary structure comprises 148 residues: Inner membrane protein YccF (148 aa).

The Periplasmic portion of the chain corresponds to 1–14 (MRTVLNILNFVLGG). The chain crosses the membrane as a helical span at residues 15 to 37 (FATTLGWLLATLVSIVLIFTLPL). Residues 38–76 (TRSCWEITKLSLVPYGNEAIHVDELNPAGKNVLLNTGGT) lie on the Cytoplasmic side of the membrane. A helical transmembrane segment spans residues 77-99 (VLNIFWLIFFGWWLCLMHIATGI). Residues 100-102 (AQC) are Periplasmic-facing. Residues 103 to 125 (ISIIGIPVGIANFKIAAIALWPV) traverse the membrane as a helical segment. Over 126-148 (GRRVVSVETAQAAREANARRRFE) the chain is Cytoplasmic.

It is found in the cell inner membrane. This is Inner membrane protein YccF (yccF) from Escherichia coli (strain K12).